A 486-amino-acid chain; its full sequence is Homoserine O-acetyltransferase (486 aa).

One can recognise an AB hydrolase-1 domain in the interval 66-436 (NVLVICHALT…PEGHDAFLLE (371 aa)). Residue serine 162 is part of the active site. Serine 162 serves as the catalytic Nucleophile. Positions 248-274 (KFSRRSPSIAQQQKAQKAEVRKPSTVS) are disordered. Polar residues predominate over residues 250 to 262 (SRRSPSIAQQQKA). Catalysis depends on residues aspartate 401 and histidine 430.

The protein belongs to the AB hydrolase superfamily. MetX family.

It catalyses the reaction L-homoserine + acetyl-CoA = O-acetyl-L-homoserine + CoA. The protein operates within amino-acid biosynthesis; L-methionine biosynthesis via de novo pathway; O-acetyl-L-homoserine from L-homoserine: step 1/1. Its function is as follows. Commits homoserine to the methionine biosynthesis pathway by catalyzing its O-acetylation. The chain is Homoserine O-acetyltransferase (MET2) from Saccharomyces pastorianus (Lager yeast).